A 221-amino-acid polypeptide reads, in one-letter code: UPF0758 protein HI_0952 (221 aa).

The MPN domain occupies 99–221; sequence IINDPETVKL…CYSFAENCLL (123 aa). The Zn(2+) site is built by H170, H172, and D183. The short motif at 170–183 is the JAMM motif element; sequence HNHPSGITEPSYSD.

Belongs to the UPF0758 family.

This Haemophilus influenzae (strain ATCC 51907 / DSM 11121 / KW20 / Rd) protein is UPF0758 protein HI_0952.